We begin with the raw amino-acid sequence, 438 residues long: Aspartate--tRNA(Asp/Asn) ligase (438 aa).

E176 provides a ligand contact to L-aspartate. Positions 198–201 (QLYK) are aspartate. R220 provides a ligand contact to L-aspartate. ATP contacts are provided by residues 220–222 (RAE), 228–230 (RHL), and E361. Mg(2+) contacts are provided by E361 and S364. L-aspartate is bound by residues S364 and R368. Residue 409–412 (GADR) participates in ATP binding.

This sequence belongs to the class-II aminoacyl-tRNA synthetase family. Type 2 subfamily. In terms of assembly, homodimer. Mg(2+) serves as cofactor.

It localises to the cytoplasm. It catalyses the reaction tRNA(Asx) + L-aspartate + ATP = L-aspartyl-tRNA(Asx) + AMP + diphosphate. Aspartyl-tRNA synthetase with relaxed tRNA specificity since it is able to aspartylate not only its cognate tRNA(Asp) but also tRNA(Asn). Reaction proceeds in two steps: L-aspartate is first activated by ATP to form Asp-AMP and then transferred to the acceptor end of tRNA(Asp/Asn). The protein is Aspartate--tRNA(Asp/Asn) ligase of Methanococcus maripaludis (strain C5 / ATCC BAA-1333).